The following is a 482-amino-acid chain: tRNA sulfurtransferase (482 aa).

Residues 61-165 enclose the THUMP domain; the sequence is SAIRDALTRI…QDRLLLIKGR (105 aa). ATP-binding positions include 183–184, Lys265, Gly287, and Gln296; that span reads LI. The cysteines at positions 344 and 456 are disulfide-linked. The Rhodanese domain occupies 404–482; that stretch reads FAPTDVLLDI…GFSNVKVYRP (79 aa). Cys456 acts as the Cysteine persulfide intermediate in catalysis.

It belongs to the ThiI family.

It is found in the cytoplasm. It catalyses the reaction [ThiI sulfur-carrier protein]-S-sulfanyl-L-cysteine + a uridine in tRNA + 2 reduced [2Fe-2S]-[ferredoxin] + ATP + H(+) = [ThiI sulfur-carrier protein]-L-cysteine + a 4-thiouridine in tRNA + 2 oxidized [2Fe-2S]-[ferredoxin] + AMP + diphosphate. It carries out the reaction [ThiS sulfur-carrier protein]-C-terminal Gly-Gly-AMP + S-sulfanyl-L-cysteinyl-[cysteine desulfurase] + AH2 = [ThiS sulfur-carrier protein]-C-terminal-Gly-aminoethanethioate + L-cysteinyl-[cysteine desulfurase] + A + AMP + 2 H(+). Its pathway is cofactor biosynthesis; thiamine diphosphate biosynthesis. Its function is as follows. Catalyzes the ATP-dependent transfer of a sulfur to tRNA to produce 4-thiouridine in position 8 of tRNAs, which functions as a near-UV photosensor. Also catalyzes the transfer of sulfur to the sulfur carrier protein ThiS, forming ThiS-thiocarboxylate. This is a step in the synthesis of thiazole, in the thiamine biosynthesis pathway. The sulfur is donated as persulfide by IscS. The protein is tRNA sulfurtransferase of Pectobacterium carotovorum subsp. carotovorum (strain PC1).